The primary structure comprises 402 residues: Tol-Pal system protein TolB (402 aa).

The N-terminal stretch at 1–17 (MKKIVAIFLVFLGSLWA) is a signal peptide.

The protein belongs to the TolB family. The Tol-Pal system is composed of five core proteins: the inner membrane proteins TolA, TolQ and TolR, the periplasmic protein TolB and the outer membrane protein Pal. They form a network linking the inner and outer membranes and the peptidoglycan layer.

The protein resides in the periplasm. Functionally, part of the Tol-Pal system, which plays a role in outer membrane invagination during cell division and is important for maintaining outer membrane integrity. This is Tol-Pal system protein TolB from Campylobacter jejuni (strain RM1221).